The chain runs to 238 residues: MSSQICRSASKAAKSLLSSAKNARFFSEGRAIGAAAAVSASGKIPLYASNFARSSGSGVASKSWITGLLALPAAAYMIQDQEVLAAEMERTFIAIKPDGVQRGLISEIISRFERKGFKLVGIKVIVPSKDFAQKHYHDLKERPFFNGLCDFLSSGPVIAMVWEGDGVIRYGRKLIGATDPQKSEPGTIRGDLAVTVGRNIIHGSDGPETAKDEISLWFKPQELVSYTSNSEKWLYGDN.

The transit peptide at 1-85 directs the protein to the chloroplast and mitochondrion; it reads MSSQICRSAS…YMIQDQEVLA (85 aa). ATP contacts are provided by lysine 96, phenylalanine 144, arginine 172, threonine 178, arginine 189, and asparagine 199. Histidine 202 acts as the Pros-phosphohistidine intermediate in catalysis.

It belongs to the NDK family. As to quaternary structure, homohexamer. Mg(2+) serves as cofactor.

The protein localises to the plastid. It localises to the chloroplast thylakoid lumen. Its subcellular location is the mitochondrion intermembrane space. It catalyses the reaction a 2'-deoxyribonucleoside 5'-diphosphate + ATP = a 2'-deoxyribonucleoside 5'-triphosphate + ADP. The catalysed reaction is a ribonucleoside 5'-diphosphate + ATP = a ribonucleoside 5'-triphosphate + ADP. Functionally, major role in the synthesis of nucleoside triphosphates other than ATP. The ATP gamma phosphate is transferred to the NDP beta phosphate via a ping-pong mechanism, using a phosphorylated active-site intermediate. Shows the highest specificity towards GDP. The protein is Nucleoside diphosphate kinase III, chloroplastic/mitochondrial (NDPK3) of Arabidopsis thaliana (Mouse-ear cress).